Here is a 348-residue protein sequence, read N- to C-terminus: Secreted frizzled-related protein 4 (348 aa).

The N-terminal stretch at M1–G18 is a signal peptide. The FZ domain maps to V19–P139. Intrachain disulfides connect C24/C85, C32/C78, C69/C108, C97/C136, and C101/C125. N-linked (GlcNAc...) asparagine glycans are attached at residues N38 and N68. N116, N194, and N240 each carry an N-linked (GlcNAc...) asparagine glycan. The NTR domain occupies C178–R296. Residues E289–Q303 are compositionally biased toward basic and acidic residues. The interval E289–S348 is disordered. Basic residues predominate over residues K330 to S348.

This sequence belongs to the secreted frizzled-related protein (sFRP) family. In terms of tissue distribution, expressed in the involuting mammary gland, ovarian corpus luteum and prostate. In ovaries, low levels found in granulosa cells. High levels in corpora lutea of pregnant animals.

It localises to the secreted. Its function is as follows. Soluble frizzled-related proteins (sFRPS) function as modulators of Wnt signaling through direct interaction with Wnts. They have a role in regulating cell growth and differentiation in specific cell types. SFRP4 plays a role in bone morphogenesis. May also act as a regulator of adult uterine morphology and function. May also increase apoptosis during ovulation possibly through modulation of FZ1/FZ4/WNT4 signaling. Has phosphaturic effects by specifically inhibiting sodium-dependent phosphate uptake. In Rattus norvegicus (Rat), this protein is Secreted frizzled-related protein 4 (Sfrp4).